A 230-amino-acid chain; its full sequence is dITP/XTP pyrophosphatase (230 aa).

Residue 7 to 12 (STNPGK) coordinates substrate. Mg(2+) contacts are provided by E41 and D70. D70 functions as the Proton acceptor in the catalytic mechanism. Substrate is bound by residues S71, 181–184 (FGYD), K205, and 210–211 (HR).

This sequence belongs to the HAM1 NTPase family. Homodimer. The cofactor is Mg(2+).

It catalyses the reaction XTP + H2O = XMP + diphosphate + H(+). The enzyme catalyses dITP + H2O = dIMP + diphosphate + H(+). The catalysed reaction is ITP + H2O = IMP + diphosphate + H(+). Functionally, pyrophosphatase that catalyzes the hydrolysis of nucleoside triphosphates to their monophosphate derivatives, with a high preference for the non-canonical purine nucleotides XTP (xanthosine triphosphate), dITP (deoxyinosine triphosphate) and ITP. Seems to function as a house-cleaning enzyme that removes non-canonical purine nucleotides from the nucleotide pool, thus preventing their incorporation into DNA/RNA and avoiding chromosomal lesions. This chain is dITP/XTP pyrophosphatase, found in Anaeromyxobacter sp. (strain Fw109-5).